The primary structure comprises 134 residues: Transcription antitermination protein NusB (134 aa).

This sequence belongs to the NusB family.

Functionally, involved in transcription antitermination. Required for transcription of ribosomal RNA (rRNA) genes. Binds specifically to the boxA antiterminator sequence of the ribosomal RNA (rrn) operons. The chain is Transcription antitermination protein NusB from Halothermothrix orenii (strain H 168 / OCM 544 / DSM 9562).